The chain runs to 540 residues: 2-succinyl-5-enolpyruvyl-6-hydroxy-3-cyclohexene-1-carboxylate synthase (540 aa).

The protein belongs to the TPP enzyme family. MenD subfamily. As to quaternary structure, homodimer. Mg(2+) is required as a cofactor. Requires Mn(2+) as cofactor. The cofactor is thiamine diphosphate.

The catalysed reaction is isochorismate + 2-oxoglutarate + H(+) = 5-enolpyruvoyl-6-hydroxy-2-succinyl-cyclohex-3-ene-1-carboxylate + CO2. It functions in the pathway quinol/quinone metabolism; 1,4-dihydroxy-2-naphthoate biosynthesis; 1,4-dihydroxy-2-naphthoate from chorismate: step 2/7. The protein operates within quinol/quinone metabolism; menaquinone biosynthesis. Functionally, catalyzes the thiamine diphosphate-dependent decarboxylation of 2-oxoglutarate and the subsequent addition of the resulting succinic semialdehyde-thiamine pyrophosphate anion to isochorismate to yield 2-succinyl-5-enolpyruvyl-6-hydroxy-3-cyclohexene-1-carboxylate (SEPHCHC). This Mycobacteroides abscessus (strain ATCC 19977 / DSM 44196 / CCUG 20993 / CIP 104536 / JCM 13569 / NCTC 13031 / TMC 1543 / L948) (Mycobacterium abscessus) protein is 2-succinyl-5-enolpyruvyl-6-hydroxy-3-cyclohexene-1-carboxylate synthase.